The chain runs to 337 residues: UDP-N-acetylenolpyruvoylglucosamine reductase (337 aa).

Residues Ile17–Arg186 form the FAD-binding PCMH-type domain. Arg162 is an active-site residue. Ser237 serves as the catalytic Proton donor. The active site involves Glu333.

This sequence belongs to the MurB family. The cofactor is FAD.

It localises to the cytoplasm. It carries out the reaction UDP-N-acetyl-alpha-D-muramate + NADP(+) = UDP-N-acetyl-3-O-(1-carboxyvinyl)-alpha-D-glucosamine + NADPH + H(+). It functions in the pathway cell wall biogenesis; peptidoglycan biosynthesis. Cell wall formation. This chain is UDP-N-acetylenolpyruvoylglucosamine reductase, found in Flavobacterium johnsoniae (strain ATCC 17061 / DSM 2064 / JCM 8514 / BCRC 14874 / CCUG 350202 / NBRC 14942 / NCIMB 11054 / UW101) (Cytophaga johnsonae).